The chain runs to 188 residues: Elongation factor P (188 aa).

This sequence belongs to the elongation factor P family.

Its subcellular location is the cytoplasm. Its pathway is protein biosynthesis; polypeptide chain elongation. Functionally, involved in peptide bond synthesis. Stimulates efficient translation and peptide-bond synthesis on native or reconstituted 70S ribosomes in vitro. Probably functions indirectly by altering the affinity of the ribosome for aminoacyl-tRNA, thus increasing their reactivity as acceptors for peptidyl transferase. This Wolbachia sp. subsp. Brugia malayi (strain TRS) protein is Elongation factor P.